The primary structure comprises 207 residues: VIFALVLGNASPVQSVAITATAVATAIGAASQIISAGTSLASTILSGLAASGYRVTCAIQVENWTRYPLIYATVQINRNAAVTVSPSSILPGKREGFSVRMPNGLAEGVYGTVSWELLGIKRRFVLMWSAPFNFNHFSNWMGVGLTRPGITKVPSGMTWFNKMYYDKTGRVGNLHFERGEFYYETNPVIYRDSKFEIEGTMTNIHNA.

The N-terminal stretch at 1–11 (VIFALVLGNAS) is a signal peptide. Positions 35–54 (SAGTSLASTILSGLAASGYR) are N-terminal region. Phosphocholine contacts are provided by G111, S129, P131, Y164, and Y165.

The protein belongs to the actinoporin family. Conoidea subfamily. In terms of assembly, octamer or nonamer in membranes. Monomer in the soluble state. Expressed by the venom duct.

It localises to the secreted. The protein resides in the nematocyst. The protein localises to the target cell membrane. Pore-forming protein that forms pores of around 1 nm and causes cardiac stimulation and cytolysis. In Terebra subulata (Chocolate spotted auger), this protein is Tereporin-Ts1.